A 189-amino-acid chain; its full sequence is MSRIGKLPISIPTGVTVTLKDNVVTVKGPKGELSQFVDPSINVAIEDGHVMLTENENAMLDNVKQRHAFHGLYRSLVNNMVIGVSEGYKKELELVGVGYRASNNGNIIDFALGYTHNIFMQLPPEIKVETKSERNKNPLIILESCDKQLLGQVCSKIRSFRKPEPYKGKGIKFVGEEIRRKSGKSAGAK.

This sequence belongs to the universal ribosomal protein uL6 family. Part of the 50S ribosomal subunit.

This protein binds to the 23S rRNA, and is important in its secondary structure. It is located near the subunit interface in the base of the L7/L12 stalk, and near the tRNA binding site of the peptidyltransferase center. This Phocaeicola vulgatus (strain ATCC 8482 / DSM 1447 / JCM 5826 / CCUG 4940 / NBRC 14291 / NCTC 11154) (Bacteroides vulgatus) protein is Large ribosomal subunit protein uL6.